The chain runs to 523 residues: GMP synthase [glutamine-hydrolyzing] (523 aa).

A Glutamine amidotransferase type-1 domain is found at 8-205 (KILILDFGSQ…VVNICGCETK (198 aa)). Catalysis depends on C85, which acts as the Nucleophile. Catalysis depends on residues H179 and E181. In terms of domain architecture, GMPS ATP-PPase spans 206–398 (WTAENIIEDA…LGLPAEMLNR (193 aa)). 233–239 (SGGVDSS) provides a ligand contact to ATP.

Homodimer.

It catalyses the reaction XMP + L-glutamine + ATP + H2O = GMP + L-glutamate + AMP + diphosphate + 2 H(+). Its pathway is purine metabolism; GMP biosynthesis; GMP from XMP (L-Gln route): step 1/1. Catalyzes the synthesis of GMP from XMP. In Glaesserella parasuis serovar 5 (strain SH0165) (Haemophilus parasuis), this protein is GMP synthase [glutamine-hydrolyzing].